The sequence spans 247 residues: MLKQRFVLDTTALTDLQTREVMGYTSLCEGMKAILDLIADARLQFGISCYVPYPSVYKEMYEFASRNGCDREVTAKIDTWLVKKAPDRYRVDVTSQIFHEYVSYMRERINRGMGVAEDAIWEAATECLFMENPQNKKKEYREEVEREVIGGIIGKFRNKYRAALRYGILDSAPDIDVLILAKELDAAVVASDYGIEKWAEQLGVRFVPANTFPMMIKEYLKHSPEGEKEKGEADKKKKSHSEEAEFI.

A disordered region spans residues 223–247 (SPEGEKEKGEADKKKKSHSEEAEFI).

Belongs to the HARP family.

It carries out the reaction Endonucleolytic cleavage of RNA, removing 5'-extranucleotides from tRNA precursor.. Its function is as follows. RNA-free RNase P that catalyzes the removal of the 5'-leader sequence from pre-tRNA to produce the mature 5'-terminus. The polypeptide is RNA-free ribonuclease P (Methanosarcina acetivorans (strain ATCC 35395 / DSM 2834 / JCM 12185 / C2A)).